Consider the following 636-residue polypeptide: Topoisomerase I damage affected protein 7 (636 aa).

Over residues methionine 1–isoleucine 18 the composition is skewed to polar residues. Disordered regions lie at residues methionine 1–serine 33, threonine 87–proline 109, asparagine 246–asparagine 271, proline 299–threonine 326, and glutamine 339–proline 362. Asparagine 4 carries N-linked (GlcNAc...) asparagine glycosylation. 2 stretches are compositionally biased toward low complexity: residues serine 19–serine 33 and threonine 87–aspartate 108. A glycan (N-linked (GlcNAc...) asparagine) is linked at asparagine 257. A helical transmembrane segment spans residues isoleucine 457–phenylalanine 477. Asparagine 492 carries N-linked (GlcNAc...) asparagine glycosylation. Positions glutamine 510–phenylalanine 541 are enriched in polar residues. The interval glutamine 510–proline 551 is disordered. Lysine 512 is covalently cross-linked (Glycyl lysine isopeptide (Lys-Gly) (interchain with G-Cter in ubiquitin)). Asparagine 557, asparagine 562, and asparagine 626 each carry an N-linked (GlcNAc...) asparagine glycan. A Phosphoserine modification is found at serine 628.

It belongs to the TDA7 family.

It is found in the vacuole membrane. The protein is Topoisomerase I damage affected protein 7 (TDA7) of Saccharomyces cerevisiae (strain ATCC 204508 / S288c) (Baker's yeast).